Here is a 664-residue protein sequence, read N- to C-terminus: Chaperone protein dnaK1 (664 aa).

A Phosphothreonine; by autocatalysis modification is found at threonine 198.

The protein belongs to the heat shock protein 70 family.

In terms of biological role, acts as a chaperone. The polypeptide is Chaperone protein dnaK1 (dnaK1) (Prochlorococcus marinus (strain MIT 9313)).